Here is a 620-residue protein sequence, read N- to C-terminus: Membrane protein insertase YidC (620 aa).

The chain crosses the membrane as a helical span at residues 7 to 27 (NYLIAIALSVMVVLGWQFFYM). Residues 37–58 (AEQAQQAQQAKTPATQATPGAA) are compositionally biased toward low complexity. A disordered region spans residues 37-77 (AEQAQQAQQAKTPATQATPGAAVNGALPGQTQASATTSRED). 4 consecutive transmembrane segments (helical) span residues 399–419 (FGVA…PLAS), 469–489 (WPLL…YITI), 514–534 (LFGL…WPII), and 560–580 (WMPL…VIYW).

The protein belongs to the OXA1/ALB3/YidC family. Type 1 subfamily. Interacts with the Sec translocase complex via SecD. Specifically interacts with transmembrane segments of nascent integral membrane proteins during membrane integration.

It localises to the cell inner membrane. Required for the insertion and/or proper folding and/or complex formation of integral membrane proteins into the membrane. Involved in integration of membrane proteins that insert both dependently and independently of the Sec translocase complex, as well as at least some lipoproteins. Aids folding of multispanning membrane proteins. The polypeptide is Membrane protein insertase YidC (Allorhizobium ampelinum (strain ATCC BAA-846 / DSM 112012 / S4) (Agrobacterium vitis (strain S4))).